The primary structure comprises 1394 residues: Kinesin-like protein KIF27 (1394 aa).

Positions 5–341 (PIKVAVRIRP…LKYANRARNI (337 aa)) constitute a Kinesin motor domain. An ATP-binding site is contributed by 84 to 91 (GQTGSGKT). Coiled-coil stretches lie at residues 352-418 (QADR…IEQA) and 498-554 (QKDL…ELAK). Disordered stretches follow at residues 559–582 (VPTS…RPHT) and 642–665 (FSDN…RSHS). Positions 571 to 580 (PDARASEKRP) are enriched in basic and acidic residues. S643, S646, S672, S675, and S704 each carry phosphoserine. Coiled-coil stretches lie at residues 709-891 (LQKL…GQGE), 921-1078 (LDEQ…SIQS), 1118-1152 (NKVI…HELE), and 1186-1226 (DQDG…RLKD). Residues 886 to 916 (KAGQGEGLNPKAEDQDGFNLNRRKSPFRSGD) form a disordered region. The residue at position 999 (S999) is a Phosphoserine. The span at 1267-1280 (TENTKLNGSEREVD) shows a compositional bias: basic and acidic residues. Disordered regions lie at residues 1267–1319 (TENT…LQSI) and 1325–1344 (ARPF…PVRS). Polar residues-rich tracts occupy residues 1281-1295 (NSSS…TQQI) and 1309-1319 (IAPSSGQLQSI). Phosphoserine occurs at positions 1365 and 1387.

The protein belongs to the TRAFAC class myosin-kinesin ATPase superfamily. Kinesin family. KIF27 subfamily. Interacts with STK36.

The protein localises to the cytoplasm. The protein resides in the cytoskeleton. It localises to the cell projection. Its subcellular location is the cilium. Its function is as follows. Plays an essential role in motile ciliogenesis. In Mus musculus (Mouse), this protein is Kinesin-like protein KIF27 (Kif27).